Reading from the N-terminus, the 94-residue chain is Core protein OPG142 (94 aa).

Belongs to the orthopoxvirus OPG142 family. In terms of assembly, part of a complex composed of the kinase OPG054, OPG092, OPG100, OPG114, OPG115, OPG142 and OPG157.

The protein localises to the host cytoplasm. It is found in the virion. Late protein which is a part of a large complex required for early virion morphogenesis. This complex participates in the formation of virosomes and the incorporation of virosomal contents into nascent immature virions. Required for the stability and kinase activity of OPG054. This is Core protein OPG142 (OPG142) from Homo sapiens (Human).